Consider the following 492-residue polypeptide: MKYNLNQLFKNYKINGLSTNSQTVKENEVFFALKGQNVDGNDFINDALNNGAVLVITENKKNTVIDKVIYVEDVYEALYEAIEIFYPKKPKNLISVTGTNGKSSVVSYIAQTYFLLRKKAAFIGTIGLEIFGCNNIINDVPSLTTLDYLNFRKIAHNLAEDSIEYLAFEASSHGLEQGRLGKTKVNIVSFTSFSQDHLDYHHTKENYLLAKLKLFTDHLLPSGIAILNSDIEEIEFVKDYLRNNNVKFITVGKKGDVQITKITCSLTGQNIDFIFNNIIYNLHTLIIGSFQASNLLIAALTLYYTGFKFDEIIEALSKVKPVKGRMERIDGTNIFVDYSHTPDALEKALIELQNIKPHGGKLSVIFGCGGDRDKTKRGLMGKIAAKFADNVIITDDNPRFEDPKLIRTEIIRGIGTATYTEIESREEAIKYGINNLKQDDILLIAGKGHENYQIVGDKKLPFDDSEVVRKYLFSMSCTRNQQKHLVSSRTVV.

Residue serine 21 participates in UDP-N-acetyl-alpha-D-muramoyl-L-alanyl-D-glutamate binding. An ATP-binding site is contributed by 98 to 104; sequence GTNGKSS. Residues 144–145, serine 171, glutamine 177, and arginine 179 each bind UDP-N-acetyl-alpha-D-muramoyl-L-alanyl-D-glutamate; that span reads TT. Lysine 211 bears the N6-carboxylysine mark. Meso-2,6-diaminopimelate-binding positions include arginine 372, 396 to 399, glycine 446, and glutamate 450; that span reads DNPR. The short motif at 396 to 399 is the Meso-diaminopimelate recognition motif element; it reads DNPR.

It belongs to the MurCDEF family. MurE subfamily. Mg(2+) serves as cofactor. Post-translationally, carboxylation is probably crucial for Mg(2+) binding and, consequently, for the gamma-phosphate positioning of ATP.

It is found in the cytoplasm. It catalyses the reaction UDP-N-acetyl-alpha-D-muramoyl-L-alanyl-D-glutamate + meso-2,6-diaminopimelate + ATP = UDP-N-acetyl-alpha-D-muramoyl-L-alanyl-gamma-D-glutamyl-meso-2,6-diaminopimelate + ADP + phosphate + H(+). The protein operates within cell wall biogenesis; peptidoglycan biosynthesis. Functionally, catalyzes the addition of meso-diaminopimelic acid to the nucleotide precursor UDP-N-acetylmuramoyl-L-alanyl-D-glutamate (UMAG) in the biosynthesis of bacterial cell-wall peptidoglycan. This chain is UDP-N-acetylmuramoyl-L-alanyl-D-glutamate--2,6-diaminopimelate ligase, found in Rickettsia typhi (strain ATCC VR-144 / Wilmington).